The chain runs to 454 residues: Bifunctional protein GlmU (454 aa).

Positions 1–225 (MNIVILAAGM…VWETLGVNSK (225 aa)) are pyrophosphorylase. Residues 6–9 (LAAG), Lys20, Gln71, 76–77 (GT), 98–100 (YGD), Gly135, Glu150, Asn165, and Asn223 each bind UDP-N-acetyl-alpha-D-glucosamine. Asp100 is a Mg(2+) binding site. Residue Asn223 coordinates Mg(2+). A linker region spans residues 226 to 246 (LQLAEVERIHQGNQARRLLEA). Residues 247-454 (GVTLLDPARI…WQRPVKQPKQ (208 aa)) form an N-acetyltransferase region. Arg329 and Lys347 together coordinate UDP-N-acetyl-alpha-D-glucosamine. His359 functions as the Proton acceptor in the catalytic mechanism. UDP-N-acetyl-alpha-D-glucosamine-binding residues include Tyr362 and Asn373. Residues Ala376, 382-383 (NY), Ser401, Ala419, and Arg436 each bind acetyl-CoA.

This sequence in the N-terminal section; belongs to the N-acetylglucosamine-1-phosphate uridyltransferase family. In the C-terminal section; belongs to the transferase hexapeptide repeat family. Homotrimer. It depends on Mg(2+) as a cofactor.

The protein localises to the cytoplasm. The catalysed reaction is alpha-D-glucosamine 1-phosphate + acetyl-CoA = N-acetyl-alpha-D-glucosamine 1-phosphate + CoA + H(+). It carries out the reaction N-acetyl-alpha-D-glucosamine 1-phosphate + UTP + H(+) = UDP-N-acetyl-alpha-D-glucosamine + diphosphate. It participates in nucleotide-sugar biosynthesis; UDP-N-acetyl-alpha-D-glucosamine biosynthesis; N-acetyl-alpha-D-glucosamine 1-phosphate from alpha-D-glucosamine 6-phosphate (route II): step 2/2. Its pathway is nucleotide-sugar biosynthesis; UDP-N-acetyl-alpha-D-glucosamine biosynthesis; UDP-N-acetyl-alpha-D-glucosamine from N-acetyl-alpha-D-glucosamine 1-phosphate: step 1/1. It functions in the pathway bacterial outer membrane biogenesis; LPS lipid A biosynthesis. Its function is as follows. Catalyzes the last two sequential reactions in the de novo biosynthetic pathway for UDP-N-acetylglucosamine (UDP-GlcNAc). The C-terminal domain catalyzes the transfer of acetyl group from acetyl coenzyme A to glucosamine-1-phosphate (GlcN-1-P) to produce N-acetylglucosamine-1-phosphate (GlcNAc-1-P), which is converted into UDP-GlcNAc by the transfer of uridine 5-monophosphate (from uridine 5-triphosphate), a reaction catalyzed by the N-terminal domain. The polypeptide is Bifunctional protein GlmU (Cupriavidus taiwanensis (strain DSM 17343 / BCRC 17206 / CCUG 44338 / CIP 107171 / LMG 19424 / R1) (Ralstonia taiwanensis (strain LMG 19424))).